The following is a 317-amino-acid chain: Beta-ketoacyl-[acyl-carrier-protein] synthase III (317 aa).

Active-site residues include C112 and H244. Positions 245-249 (QANLR) are ACP-binding. Residue N274 is part of the active site.

Belongs to the thiolase-like superfamily. FabH family. In terms of assembly, homodimer.

It localises to the cytoplasm. It carries out the reaction malonyl-[ACP] + acetyl-CoA + H(+) = 3-oxobutanoyl-[ACP] + CO2 + CoA. It functions in the pathway lipid metabolism; fatty acid biosynthesis. Catalyzes the condensation reaction of fatty acid synthesis by the addition to an acyl acceptor of two carbons from malonyl-ACP. Catalyzes the first condensation reaction which initiates fatty acid synthesis and may therefore play a role in governing the total rate of fatty acid production. Possesses both acetoacetyl-ACP synthase and acetyl transacylase activities. Its substrate specificity determines the biosynthesis of branched-chain and/or straight-chain of fatty acids. This is Beta-ketoacyl-[acyl-carrier-protein] synthase III from Salmonella paratyphi B (strain ATCC BAA-1250 / SPB7).